Reading from the N-terminus, the 351-residue chain is Prostaglandin reductase 2 (351 aa).

Residue 99 to 100 (FY) coordinates substrate. NADP(+) is bound by residues 165–168 (GACG), Lys192, Tyr208, Asn231, 253–259 (CGQISQY), 287–289 (FLV), and Asn337. 288–290 (LVL) provides a ligand contact to substrate.

This sequence belongs to the NADP-dependent oxidoreductase L4BD family. Monomer. In terms of tissue distribution, widely expressed.

The protein localises to the cytoplasm. The enzyme catalyses 13,14-dihydro-15-oxo-prostaglandin E2 + NAD(+) = 15-oxoprostaglandin E2 + NADH + H(+). It carries out the reaction 13,14-dihydro-15-oxo-prostaglandin E2 + NADP(+) = 15-oxoprostaglandin E2 + NADPH + H(+). It catalyses the reaction 13,14-dihydro-15-oxo-PGF2alpha + NADP(+) = 15-oxoprostaglandin F2alpha + NADPH + H(+). The catalysed reaction is 13,14-dihydro-15-oxo-prostaglandin E1 + NADP(+) = 15-oxoprostaglandin E1 + NADPH + H(+). The enzyme catalyses 13,14-dihydro-15-oxo-prostaglandin F1alpha + NADP(+) = 15-oxoprostaglandin F1alpha + NADPH + H(+). Its function is as follows. Functions as 15-oxo-prostaglandin 13-reductase and acts on 15-keto-PGE1, 15-keto-PGE2, 15-keto-PGE1-alpha and 15-keto-PGE2-alpha with highest activity towards 15-keto-PGE2. Overexpression represses transcriptional activity of PPARG and inhibits adipocyte differentiation. This chain is Prostaglandin reductase 2, found in Homo sapiens (Human).